Consider the following 253-residue polypeptide: Vitamin B12 import ATP-binding protein BtuD (253 aa).

In terms of domain architecture, ABC transporter spans 4 to 236 (LQLNNVSVGT…DVLSQVFEVD (233 aa)). Position 32-39 (32-39 (GPNGAGKS)) interacts with ATP.

Belongs to the ABC transporter superfamily. Vitamin B12 importer (TC 3.A.1.13.1) family. As to quaternary structure, the complex is composed of two ATP-binding proteins (BtuD), two transmembrane proteins (BtuC) and a solute-binding protein (BtuF).

Its subcellular location is the cell inner membrane. The enzyme catalyses an R-cob(III)alamin(out) + ATP + H2O = an R-cob(III)alamin(in) + ADP + phosphate + H(+). In terms of biological role, part of the ABC transporter complex BtuCDF involved in vitamin B12 import. Responsible for energy coupling to the transport system. The sequence is that of Vitamin B12 import ATP-binding protein BtuD from Yersinia pestis.